The following is a 288-amino-acid chain: Probable endonuclease 4 (288 aa).

Positions 75, 115, 153, 187, 190, 224, 237, 239, and 269 each coordinate Zn(2+).

Belongs to the AP endonuclease 2 family. Requires Zn(2+) as cofactor.

The catalysed reaction is Endonucleolytic cleavage to 5'-phosphooligonucleotide end-products.. In terms of biological role, endonuclease IV plays a role in DNA repair. It cleaves phosphodiester bonds at apurinic or apyrimidinic (AP) sites, generating a 3'-hydroxyl group and a 5'-terminal sugar phosphate. The chain is Probable endonuclease 4 from Chlamydia trachomatis serovar A (strain ATCC VR-571B / DSM 19440 / HAR-13).